The primary structure comprises 345 residues: N-acetyl-gamma-glutamyl-phosphate reductase (345 aa).

Residue Cys149 is part of the active site.

The protein belongs to the NAGSA dehydrogenase family. Type 1 subfamily.

It is found in the cytoplasm. The enzyme catalyses N-acetyl-L-glutamate 5-semialdehyde + phosphate + NADP(+) = N-acetyl-L-glutamyl 5-phosphate + NADPH + H(+). The protein operates within amino-acid biosynthesis; L-arginine biosynthesis; N(2)-acetyl-L-ornithine from L-glutamate: step 3/4. In terms of biological role, catalyzes the NADPH-dependent reduction of N-acetyl-5-glutamyl phosphate to yield N-acetyl-L-glutamate 5-semialdehyde. The sequence is that of N-acetyl-gamma-glutamyl-phosphate reductase from Bacillus anthracis.